Here is a 251-residue protein sequence, read N- to C-terminus: Cobalt transport protein CbiM (251 aa).

Positions 1–27 (MNKKKNTILIGLYFLVGIMLFPDRIYA) are cleaved as a signal peptide. Helical transmembrane passes span 35–55 (LPVK…ALGI), 66–86 (GPGI…LSSL), 103–123 (LGAI…VLIF), 131–151 (GGLT…PFVA), 166–186 (WLSV…TTAT), and 208–228 (VFAT…VLIF).

Belongs to the CbiM family. Forms an energy-coupling factor (ECF) transporter complex composed of an ATP-binding protein (A component, CbiO), a transmembrane protein (T component, CbiQ) and 2 possible substrate-capture proteins (S components, CbiM and CbiN) of unknown stoichimetry.

The protein localises to the cell membrane. It participates in cofactor biosynthesis; adenosylcobalamin biosynthesis. Part of the energy-coupling factor (ECF) transporter complex CbiMNOQ involved in cobalt import. This chain is Cobalt transport protein CbiM, found in Acetohalobium arabaticum (strain ATCC 49924 / DSM 5501 / Z-7288).